The following is a 332-amino-acid chain: Glycerol-3-phosphate dehydrogenase [NAD(P)+] (332 aa).

Trp-11, Arg-30, and Lys-108 together coordinate NADPH. The sn-glycerol 3-phosphate site is built by Lys-108, Gly-137, and Ser-139. Ala-141 is an NADPH binding site. Lys-192, Asp-245, Ser-255, Arg-256, and Asn-257 together coordinate sn-glycerol 3-phosphate. The Proton acceptor role is filled by Lys-192. Arg-256 serves as a coordination point for NADPH. Residues Val-280 and Glu-282 each coordinate NADPH.

It belongs to the NAD-dependent glycerol-3-phosphate dehydrogenase family.

The protein localises to the cytoplasm. The catalysed reaction is sn-glycerol 3-phosphate + NAD(+) = dihydroxyacetone phosphate + NADH + H(+). The enzyme catalyses sn-glycerol 3-phosphate + NADP(+) = dihydroxyacetone phosphate + NADPH + H(+). It participates in membrane lipid metabolism; glycerophospholipid metabolism. Its function is as follows. Catalyzes the reduction of the glycolytic intermediate dihydroxyacetone phosphate (DHAP) to sn-glycerol 3-phosphate (G3P), the key precursor for phospholipid synthesis. The polypeptide is Glycerol-3-phosphate dehydrogenase [NAD(P)+] (Burkholderia multivorans (strain ATCC 17616 / 249)).